Consider the following 285-residue polypeptide: 3',5'-nucleoside bisphosphate phosphatase (285 aa).

6 residues coordinate Mn(2+): histidine 7, histidine 9, aspartate 14, histidine 39, glutamate 64, and histidine 75. Positions 14 and 39 each coordinate substrate. Substrate-binding positions include 99–102 and 134–135; these read RLER and RT. Mn(2+) is bound by residues histidine 191, aspartate 248, and histidine 250. Residue histidine 250 participates in substrate binding.

Belongs to the PHP family. Monomer. The cofactor is Mn(2+).

The enzyme catalyses a ribonucleoside 3',5'-bisphosphate + H2O = a ribonucleoside 5'-phosphate + phosphate. Functionally, hydrolyzes 3',5'-bisphosphonucleosides (pGp, pCp, pUp, and pIp) to nucleoside 5'-phosphate and orthophosphate. Has similar catalytic efficiencies with all the bases. Also shows activity with ribonucleoside 2'-deoxyribonucleoside 3',5'-bisphosphates. Does not show activity with nucleoside 2',5'-bisphosphates. This chain is 3',5'-nucleoside bisphosphate phosphatase, found in Chromobacterium violaceum (strain ATCC 12472 / DSM 30191 / JCM 1249 / CCUG 213 / NBRC 12614 / NCIMB 9131 / NCTC 9757 / MK).